The primary structure comprises 310 residues: Olfactory receptor 10G2 (310 aa).

At 1-29 the chain is on the extracellular side; sequence MGKTKNTSLDAVVTDFILLGLSHPPNLRS. Residue asparagine 6 is glycosylated (N-linked (GlcNAc...) asparagine). A helical transmembrane segment spans residues 30 to 50; it reads LLFLVFFIIYILTQLGNLLIL. Topologically, residues 51-58 are cytoplasmic; it reads LTMWADPK. A helical membrane pass occupies residues 59 to 80; that stretch reads LCARPMYILLGVLSFLDMWLSS. The Extracellular portion of the chain corresponds to 81 to 104; sequence VTVPLLILDFTPSIKAIPFGGCVA. Cysteine 102 and cysteine 194 form a disulfide bridge. A helical membrane pass occupies residues 105–125; it reads QLYFFHFLGSTQCFLYTLMAY. The Cytoplasmic segment spans residues 126 to 144; the sequence is DRYLAICQPLRYPVLMNGR. Residues 145–165 form a helical membrane-spanning segment; the sequence is LCTVLVAGAWVAGSMHGSIQA. Topologically, residues 166–202 are extracellular; sequence TLTFRLPYCGPNQVDYFICDIPAVLRLACADTTVNEL. Residues 203 to 222 traverse the membrane as a helical segment; it reads VTFVDVGVVAASCFMLILLS. Residues 223-242 lie on the Cytoplasmic side of the membrane; the sequence is YANIVNAILKIRTTDGRRRA. A helical transmembrane segment spans residues 243 to 263; that stretch reads FSTCGSHLIVVTVYYVPCIFI. Over 264 to 274 the chain is Extracellular; the sequence is YLRAGSKDPLD. The helical transmembrane segment at 275–295 threads the bilayer; the sequence is GAAAVFYTVVTPLLNPLIYTL. At 296–310 the chain is on the cytoplasmic side; sequence RNQEVKSALKRITAG.

This sequence belongs to the G-protein coupled receptor 1 family.

It is found in the cell membrane. Odorant receptor. The sequence is that of Olfactory receptor 10G2 (OR10G2) from Homo sapiens (Human).